We begin with the raw amino-acid sequence, 93 residues long: Cobalt transport protein CbiN (93 aa).

2 helical membrane passes run 5–25 (LMLLAMVVALVILPFFINHGG) and 63–83 (LLFTLQGSLGAAVIFYILGYC).

Belongs to the CbiN family. As to quaternary structure, forms an energy-coupling factor (ECF) transporter complex composed of an ATP-binding protein (A component, CbiO), a transmembrane protein (T component, CbiQ) and 2 possible substrate-capture proteins (S components, CbiM and CbiN) of unknown stoichimetry.

The protein resides in the cell inner membrane. Its pathway is cofactor biosynthesis; adenosylcobalamin biosynthesis. In terms of biological role, part of the energy-coupling factor (ECF) transporter complex CbiMNOQ involved in cobalt import. This chain is Cobalt transport protein CbiN, found in Salmonella arizonae (strain ATCC BAA-731 / CDC346-86 / RSK2980).